The sequence spans 557 residues: Laccase-11 (557 aa).

Positions 1–23 (MKMGFLFLFCYLLAFLGYSPVDA) are cleaved as a signal peptide. Plastocyanin-like domains follow at residues 31–147 (DVQV…PAPG) and 158–308 (ESNI…YKGV). 3 N-linked (GlcNAc...) asparagine glycosylation sites follow: asparagine 36, asparagine 69, and asparagine 77. Cu cation contacts are provided by histidine 81 and histidine 83. Asparagine 115 carries an N-linked (GlcNAc...) asparagine glycan. Cu cation-binding residues include histidine 126 and histidine 128. Asparagine 240, asparagine 296, asparagine 323, asparagine 371, asparagine 381, asparagine 398, asparagine 416, and asparagine 440 each carry an N-linked (GlcNAc...) asparagine glycan. One can recognise a Plastocyanin-like 3 domain in the interval 406-541 (DFPDRPPKAF…KMAFVVENGE (136 aa)). The Cu cation site is built by histidine 458, histidine 461, histidine 463, histidine 520, cysteine 521, histidine 522, and histidine 526.

The protein belongs to the multicopper oxidase family. It depends on Cu cation as a cofactor. Ubiquitous and constitutive.

It localises to the secreted. The protein localises to the extracellular space. Its subcellular location is the apoplast. It catalyses the reaction 4 hydroquinone + O2 = 4 benzosemiquinone + 2 H2O. Functionally, lignin degradation and detoxification of lignin-derived products. The protein is Laccase-11 (LAC11) of Arabidopsis thaliana (Mouse-ear cress).